Consider the following 151-residue polypeptide: UPF0208 membrane protein YPTB2595 (151 aa).

Helical transmembrane passes span 46–66 (FGIR…IALG) and 69–89 (LGPA…GLWW).

The protein belongs to the UPF0208 family.

The protein localises to the cell inner membrane. The chain is UPF0208 membrane protein YPTB2595 from Yersinia pseudotuberculosis serotype I (strain IP32953).